A 201-amino-acid polypeptide reads, in one-letter code: UPF0301 protein MSMEG_6921/MSMEI_6732 (201 aa).

The protein belongs to the UPF0301 (AlgH) family.

This chain is UPF0301 protein MSMEG_6921/MSMEI_6732, found in Mycolicibacterium smegmatis (strain ATCC 700084 / mc(2)155) (Mycobacterium smegmatis).